We begin with the raw amino-acid sequence, 95 residues long: Histone-like DNA-binding protein (95 aa).

Belongs to the bacterial histone-like protein family.

This Rickettsia felis (strain ATCC VR-1525 / URRWXCal2) (Rickettsia azadi) protein is Histone-like DNA-binding protein.